Consider the following 1008-residue polypeptide: Histone deacetylase complex subunit SAP130-A (1008 aa).

Polar residues predominate over residues 1 to 31 (MNSQQFPRQAASMPSPQVSNSGASVGQNVQG). Disordered stretches follow at residues 1–44 (MNSQ…DVQS), 113–134 (SKST…SAVP), 415–435 (IQSD…HRAS), and 617–720 (TPGG…PATI). A compositionally biased stretch (basic and acidic residues) spans 35-44 (EVARDMDVQS). Positions 618 to 644 (PGGTTVMQSHSQSPGIGSSPAQGSSPR) are enriched in polar residues. Positions 678–697 (ADQPSAAASLPSSHHPAAAV) are enriched in low complexity.

It belongs to the SAP130 family.

Its subcellular location is the nucleus. Functionally, acts as a transcriptional repressor. The sequence is that of Histone deacetylase complex subunit SAP130-A (sap130-a) from Xenopus laevis (African clawed frog).